Consider the following 149-residue polypeptide: Deoxyuridine 5'-triphosphate nucleotidohydrolase (149 aa).

Substrate-binding positions include 68–70 (RSG), Asn-81, 85–87 (LID), and Met-95.

It belongs to the dUTPase family. Mg(2+) serves as cofactor.

The catalysed reaction is dUTP + H2O = dUMP + diphosphate + H(+). The protein operates within pyrimidine metabolism; dUMP biosynthesis; dUMP from dCTP (dUTP route): step 2/2. This enzyme is involved in nucleotide metabolism: it produces dUMP, the immediate precursor of thymidine nucleotides and it decreases the intracellular concentration of dUTP so that uracil cannot be incorporated into DNA. The polypeptide is Deoxyuridine 5'-triphosphate nucleotidohydrolase (Bordetella pertussis (strain Tohama I / ATCC BAA-589 / NCTC 13251)).